Here is a 323-residue protein sequence, read N- to C-terminus: rRNA 2'-O-methyltransferase fibrillarin (323 aa).

The segment at 1-80 (MSFRPGSRGG…GARGGAKGGA (80 aa)) is disordered. Positions 7–78 (SRGGARGGRG…RGGARGGAKG (72 aa)) are enriched in gly residues. R8, R12, R15, R19, R25, R29, R35, R39, R43, R49, R53, R57, R61, R65, R69, and R73 each carry asymmetric dimethylarginine. Residues 175–176 (TS), 194–195 (EF), 219–220 (DA), and 239–242 (DVAQ) each bind S-adenosyl-L-methionine.

This sequence belongs to the methyltransferase superfamily. Fibrillarin family. In terms of assembly, component of box C/D small nucleolar ribonucleoprotein (snoRNP) particles that contain SNU13, NOP1, SIK1/NOP56 and NOP58, plus a guide RNA. In terms of processing, by homology to other fibrillarins, some or all of the N-terminal domain arginines are modified to asymmetric dimethylarginine (DMA).

Its subcellular location is the nucleus. The protein resides in the nucleolus. It carries out the reaction L-glutaminyl-[histone H2A] + S-adenosyl-L-methionine = N(5)-methyl-L-glutaminyl-[histone H2A] + S-adenosyl-L-homocysteine + H(+). S-adenosyl-L-methionine-dependent methyltransferase that has the ability to methylate both RNAs and proteins. Involved in pre-rRNA processing. Utilizes the methyl donor S-adenosyl-L-methionine to catalyze the site-specific 2'-hydroxyl methylation of ribose moieties in pre-ribosomal RNA. Site specificity is provided by a guide RNA that base pairs with the substrate. Methylation occurs at a characteristic distance from the sequence involved in base pairing with the guide RNA. Also acts as a protein methyltransferase by mediating methylation of 'Gln-105' of histone H2A (H2AQ105me), a modification that impairs binding of the FACT complex and is specifically present at 35S ribosomal DNA locus. This is rRNA 2'-O-methyltransferase fibrillarin (NOP1) from Candida glabrata (strain ATCC 2001 / BCRC 20586 / JCM 3761 / NBRC 0622 / NRRL Y-65 / CBS 138) (Yeast).